The following is an 89-amino-acid chain: UPF0175 protein ssl1255 (89 aa).

The protein belongs to the UPF0175 family.

The chain is UPF0175 protein ssl1255 from Synechocystis sp. (strain ATCC 27184 / PCC 6803 / Kazusa).